The primary structure comprises 220 residues: Large ribosomal subunit protein uL3 (220 aa).

The interval 137 to 159 (GASHGAHKNHRKPGSIGGASTPS) is disordered.

It belongs to the universal ribosomal protein uL3 family. In terms of assembly, part of the 50S ribosomal subunit. Forms a cluster with proteins L14 and L19.

Its function is as follows. One of the primary rRNA binding proteins, it binds directly near the 3'-end of the 23S rRNA, where it nucleates assembly of the 50S subunit. This is Large ribosomal subunit protein uL3 from Renibacterium salmoninarum (strain ATCC 33209 / DSM 20767 / JCM 11484 / NBRC 15589 / NCIMB 2235).